Reading from the N-terminus, the 160-residue chain is Complexin-4 (160 aa).

Positions 14-44 (KNLGFGGGSEEKKEEGGTSDPAAAKGMTREE) are disordered. Position 157 is a cysteine methyl ester (cysteine 157). Cysteine 157 is lipidated: S-farnesyl cysteine. The propeptide at 158 to 160 (SVM) is removed in mature form.

It belongs to the complexin/synaphin family. Weakly binds to the SNARE core complex containing SNAP25, VAMP2 and STX1A. Post-translationally, farnesylation mediates presynaptic targeting and is important for function in neurotransmitter release. Present specifically in the retina (at protein level). Expressed in the outer nuclear layer of the retina (at protein level). Strongly expressed at rod photoreceptor ribbon synapses (at protein level). Not expressed at conventional amacrine cell synapses, nor at cone photoreceptor ribbon synapses (at protein level). Weakly expressed at cone photoreceptor synaptic terminals (at protein level). Not expressed in the brain (at protein level).

The protein localises to the synapse. It localises to the cell membrane. In terms of biological role, complexin that regulates SNARE protein complex-mediated synaptic vesicle fusion. Required for the maintenance of synaptic ultrastructure in the adult retina. Positively regulates synaptic transmission through synaptic vesicle availability and exocytosis of neurotransmitters at photoreceptor ribbon synapses in the retina. Suppresses tonic photoreceptor activity and baseline 'noise' by suppression of Ca(2+) vesicle tonic release and the facilitation of evoked synchronous and asynchronous Ca(2+) vesicle release. In Mus musculus (Mouse), this protein is Complexin-4 (Cplx4).